Here is a 285-residue protein sequence, read N- to C-terminus: tRNA-cytidine(32) 2-sulfurtransferase (285 aa).

The PP-loop motif signature appears at 48-53 (SGGKDS). [4Fe-4S] cluster-binding residues include cysteine 122, cysteine 125, and cysteine 213.

The protein belongs to the TtcA family. In terms of assembly, homodimer. The cofactor is Mg(2+). [4Fe-4S] cluster is required as a cofactor.

It localises to the cytoplasm. It catalyses the reaction cytidine(32) in tRNA + S-sulfanyl-L-cysteinyl-[cysteine desulfurase] + AH2 + ATP = 2-thiocytidine(32) in tRNA + L-cysteinyl-[cysteine desulfurase] + A + AMP + diphosphate + H(+). It participates in tRNA modification. Its function is as follows. Catalyzes the ATP-dependent 2-thiolation of cytidine in position 32 of tRNA, to form 2-thiocytidine (s(2)C32). The sulfur atoms are provided by the cysteine/cysteine desulfurase (IscS) system. This chain is tRNA-cytidine(32) 2-sulfurtransferase, found in Cytophaga hutchinsonii (strain ATCC 33406 / DSM 1761 / CIP 103989 / NBRC 15051 / NCIMB 9469 / D465).